The primary structure comprises 121 residues: Ribosome-binding factor A (121 aa).

This sequence belongs to the RbfA family. In terms of assembly, monomer. Binds 30S ribosomal subunits, but not 50S ribosomal subunits or 70S ribosomes.

Its subcellular location is the cytoplasm. Its function is as follows. One of several proteins that assist in the late maturation steps of the functional core of the 30S ribosomal subunit. Associates with free 30S ribosomal subunits (but not with 30S subunits that are part of 70S ribosomes or polysomes). Required for efficient processing of 16S rRNA. May interact with the 5'-terminal helix region of 16S rRNA. In Clostridium acetobutylicum (strain ATCC 824 / DSM 792 / JCM 1419 / IAM 19013 / LMG 5710 / NBRC 13948 / NRRL B-527 / VKM B-1787 / 2291 / W), this protein is Ribosome-binding factor A.